Reading from the N-terminus, the 669-residue chain is DNA ligase (669 aa).

NAD(+) contacts are provided by residues 33-37 (DLTYD), 82-83 (SL), and Glu-115. Catalysis depends on Lys-117, which acts as the N6-AMP-lysine intermediate. Positions 138, 172, 286, and 310 each coordinate NAD(+). Zn(2+) is bound by residues Cys-401, Cys-404, Cys-417, and Cys-422.

The protein belongs to the NAD-dependent DNA ligase family. LigA subfamily. The cofactor is Mg(2+). Mn(2+) is required as a cofactor.

It catalyses the reaction NAD(+) + (deoxyribonucleotide)n-3'-hydroxyl + 5'-phospho-(deoxyribonucleotide)m = (deoxyribonucleotide)n+m + AMP + beta-nicotinamide D-nucleotide.. Its function is as follows. DNA ligase that catalyzes the formation of phosphodiester linkages between 5'-phosphoryl and 3'-hydroxyl groups in double-stranded DNA using NAD as a coenzyme and as the energy source for the reaction. It is essential for DNA replication and repair of damaged DNA. In Borrelia hermsii (strain HS1 / DAH), this protein is DNA ligase.